The sequence spans 777 residues: Endonuclease MutS2 (777 aa).

Residue 328–335 (GPNTGGKT) coordinates ATP. Positions 702–777 (LDIRGMNTLE…GDGATEVYLK (76 aa)) constitute a Smr domain.

This sequence belongs to the DNA mismatch repair MutS family. MutS2 subfamily. Homodimer. Binds to stalled ribosomes, contacting rRNA.

Functionally, endonuclease that is involved in the suppression of homologous recombination and thus may have a key role in the control of bacterial genetic diversity. In terms of biological role, acts as a ribosome collision sensor, splitting the ribosome into its 2 subunits. Detects stalled/collided 70S ribosomes which it binds and splits by an ATP-hydrolysis driven conformational change. Acts upstream of the ribosome quality control system (RQC), a ribosome-associated complex that mediates the extraction of incompletely synthesized nascent chains from stalled ribosomes and their subsequent degradation. Probably generates substrates for RQC. This chain is Endonuclease MutS2, found in Carboxydothermus hydrogenoformans (strain ATCC BAA-161 / DSM 6008 / Z-2901).